The primary structure comprises 176 residues: Ribosome maturation factor RimM (176 aa).

One can recognise a PRC barrel domain in the interval 94–176; that stretch reads KDEFFYFEIL…RFGFEILQNS (83 aa).

Belongs to the RimM family. In terms of assembly, binds ribosomal protein uS19.

The protein resides in the cytoplasm. Its function is as follows. An accessory protein needed during the final step in the assembly of 30S ribosomal subunit, possibly for assembly of the head region. Essential for efficient processing of 16S rRNA. May be needed both before and after RbfA during the maturation of 16S rRNA. It has affinity for free ribosomal 30S subunits but not for 70S ribosomes. This chain is Ribosome maturation factor RimM, found in Campylobacter hominis (strain ATCC BAA-381 / DSM 21671 / CCUG 45161 / LMG 19568 / NCTC 13146 / CH001A).